We begin with the raw amino-acid sequence, 977 residues long: Mast/stem cell growth factor receptor Kit (977 aa).

A signal peptide spans 1-25 (MRGARGAWDFLFVLLLLLLVQTGSS). Residues 26–525 (QPSVSPGELS…QIHAHTLFTP (500 aa)) are Extracellular-facing. Ig-like C2-type domains are found at residues 27–112 (PSVS…VFVR), 121–205 (DLPL…LKVR), 212–309 (PVVS…LEVV), 318–411 (PMMN…VYVN), and 414–508 (PEIL…FNFA). Cys58 and Cys97 are disulfide-bonded. Asn94, Asn130, and Asn145 each carry an N-linked (GlcNAc...) asparagine glycan. Cystine bridges form between Cys136–Cys186, Cys151–Cys183, and Cys233–Cys291. N-linked (GlcNAc...) asparagine glycans are attached at residues Asn284, Asn294, Asn301, Asn321, Asn353, Asn368, Asn401, Asn464, and Asn487. Cysteines 429 and 492 form a disulfide. The helical transmembrane segment at 526 to 546 (LLIGFVIAAGLMCIFVMILTY) threads the bilayer. At 547-977 (KYLQKPMYEV…TQPLLVHEDV (431 aa)) the chain is on the cytoplasmic side. Phosphotyrosine is present on residues Tyr548 and Tyr554. Position 569 (Tyr569) interacts with Mg(2+). Phosphotyrosine; by autocatalysis occurs at positions 569 and 571. The tract at residues 569–571 (YVY) is important for interaction with phosphotyrosine-binding proteins. One can recognise a Protein kinase domain in the interval 590–938 (LSFGKTLGAG…ISESTNHIYS (349 aa)). ATP is bound by residues 597–604 (GAGAFGKV), Lys624, and 672–678 (EYCCYGD). Residues Tyr704 and Tyr722 each carry the phosphotyrosine; by autocatalysis modification. At Tyr731 the chain carries Phosphotyrosine. Phosphoserine; by PKC/PRKCA occurs at positions 742 and 747. Asp793 functions as the Proton acceptor in the catalytic mechanism. Arg797 lines the ATP pocket. 2 residues coordinate Mg(2+): Asn798 and Asp811. Ser822 is modified (phosphoserine). Tyr824 is modified (phosphotyrosine; by autocatalysis). Ser892 carries the phosphoserine modification. Phosphotyrosine is present on Tyr901. Residue Tyr937 is modified to Phosphotyrosine; by autocatalysis. A Phosphoserine modification is found at Ser960.

The protein belongs to the protein kinase superfamily. Tyr protein kinase family. CSF-1/PDGF receptor subfamily. In terms of assembly, monomer in the absence of bound KITLG/SCF. Homodimer in the presence of bound KITLG/SCF, forming a heterotetramer with two KITLG/SCF molecules. Interacts (via phosphorylated tyrosine residues) with the adapter proteins GRB2 and GRB7 (via SH2 domain), and SH2B2/APS. Interacts (via C-terminus) with MPDZ (via the tenth PDZ domain). Interacts (via phosphorylated tyrosine residues) with PIK3R1 and PIK3CD. Interacts (via phosphorylated tyrosine) with CRK (isoform Crk-II), FYN, SHC1 and MATK/CHK (via SH2 domain). Interacts with LYN and FES/FPS. Interacts (via phosphorylated tyrosine residues) with the protein phosphatases PTPN6/SHP-1 (via SH2 domain), PTPN11/SHP-2 (via SH2 domain) and PTPRU. Interacts with PLCG1. Interacts with DOK1 and TEC. Interacts with IL1RAP (independent of stimulation with KITLG/SCF). A mast cell-specific KITLG/SCF-induced interleukin-33 signaling complex contains IL1RL1, IL1RAP, KIT and MYD88. Ubiquitinated by SOCS6. KIT is rapidly ubiquitinated after autophosphorylation induced by KITLG/SCF binding, leading to internalization and degradation. In terms of processing, autophosphorylated on tyrosine residues. KITLG/SCF binding promotes autophosphorylation. Phosphorylated tyrosine residues are important for interaction with specific binding partners.

Its subcellular location is the cell membrane. The enzyme catalyses L-tyrosyl-[protein] + ATP = O-phospho-L-tyrosyl-[protein] + ADP + H(+). With respect to regulation, present in an inactive conformation in the absence of bound ligand. KITLG/SCF binding leads to dimerization and activation by autophosphorylation on tyrosine residues. Activity is down-regulated by PRKCA-mediated phosphorylation on serine residues. Functionally, tyrosine-protein kinase that acts as a cell-surface receptor for the cytokine KITLG/SCF and plays an essential role in the regulation of cell survival and proliferation, hematopoiesis, stem cell maintenance, gametogenesis, mast cell development, migration and function, and in melanogenesis. In response to KITLG/SCF binding, KIT can activate several signaling pathways. Phosphorylates PIK3R1, PLCG1, SH2B2/APS and CBL. Activates the AKT1 signaling pathway by phosphorylation of PIK3R1, the regulatory subunit of phosphatidylinositol 3-kinase. Activated KIT also transmits signals via GRB2 and activation of RAS, RAF1 and the MAP kinases MAPK1/ERK2 and/or MAPK3/ERK1. Promotes activation of STAT family members STAT1, STAT3, STAT5A and STAT5B. Activation of PLCG1 leads to the production of the cellular signaling molecules diacylglycerol and inositol 1,4,5-trisphosphate. KIT signaling is modulated by protein phosphatases, and by rapid internalization and degradation of the receptor. Activated KIT promotes phosphorylation of the protein phosphatases PTPN6/SHP-1 and PTPRU, and of the transcription factors STAT1, STAT3, STAT5A and STAT5B. Promotes phosphorylation of PIK3R1, CBL, CRK (isoform Crk-II), LYN, MAPK1/ERK2 and/or MAPK3/ERK1, PLCG1, SRC and SHC1. The sequence is that of Mast/stem cell growth factor receptor Kit (KIT) from Bos taurus (Bovine).